Here is an 87-residue protein sequence, read N- to C-terminus: Small ribosomal subunit protein uS17 (87 aa).

This sequence belongs to the universal ribosomal protein uS17 family. Part of the 30S ribosomal subunit.

In terms of biological role, one of the primary rRNA binding proteins, it binds specifically to the 5'-end of 16S ribosomal RNA. This chain is Small ribosomal subunit protein uS17, found in Geobacillus sp. (strain WCH70).